The sequence spans 87 residues: Translation initiation factor IF-1 2 (87 aa).

The S1-like domain maps to 1–72; it reads MAKEELIELN…TKGRINFRHK (72 aa). The disordered stretch occupies residues 66-87; the sequence is RINFRHKDERSGPPSRPPQHRR.

Belongs to the IF-1 family. Component of the 30S ribosomal translation pre-initiation complex which assembles on the 30S ribosome in the order IF-2 and IF-3, IF-1 and N-formylmethionyl-tRNA(fMet); mRNA recruitment can occur at any time during PIC assembly.

It is found in the cytoplasm. In terms of biological role, one of the essential components for the initiation of protein synthesis. Stabilizes the binding of IF-2 and IF-3 on the 30S subunit to which N-formylmethionyl-tRNA(fMet) subsequently binds. Helps modulate mRNA selection, yielding the 30S pre-initiation complex (PIC). Upon addition of the 50S ribosomal subunit IF-1, IF-2 and IF-3 are released leaving the mature 70S translation initiation complex. The polypeptide is Translation initiation factor IF-1 2 (Bordetella parapertussis (strain 12822 / ATCC BAA-587 / NCTC 13253)).